The chain runs to 235 residues: Thiamine import ATP-binding protein ThiQ (235 aa).

The 229-residue stretch at 2–230 (LKLIDITWLY…QASASALLGI (229 aa)) folds into the ABC transporter domain. 32 to 39 (GPSGAGKS) lines the ATP pocket.

It belongs to the ABC transporter superfamily. Thiamine importer (TC 3.A.1.19.1) family. As to quaternary structure, the complex is composed of two ATP-binding proteins (ThiQ), two transmembrane proteins (ThiP) and a solute-binding protein (ThiB).

It localises to the cell inner membrane. The catalysed reaction is thiamine(out) + ATP + H2O = thiamine(in) + ADP + phosphate + H(+). Its function is as follows. Part of the ABC transporter complex ThiBPQ involved in thiamine import. Responsible for energy coupling to the transport system. The chain is Thiamine import ATP-binding protein ThiQ from Salmonella paratyphi A (strain ATCC 9150 / SARB42).